The chain runs to 145 residues: Internal scaffolding protein VP3 (145 aa).

It belongs to the microviridae B protein family.

It is found in the host cytoplasm. Participates in the assembly of the viral procapsid in the cytoplasm. Released from the procapsid upon genome packaging, possibly through affinity displacement by the protein ORF8, or by proteolysis. The polypeptide is Internal scaffolding protein VP3 (Chlamydia phage 1 (Bacteriophage Chp1)).